We begin with the raw amino-acid sequence, 248 residues long: tRNA uridine(34) hydroxylase (248 aa).

Residues 127–221 (RGRPLVLLDT…YFEEVGGEGY (95 aa)) form the Rhodanese domain. Residue cysteine 181 is the Cysteine persulfide intermediate of the active site.

It belongs to the TrhO family.

The enzyme catalyses uridine(34) in tRNA + AH2 + O2 = 5-hydroxyuridine(34) in tRNA + A + H2O. In terms of biological role, catalyzes oxygen-dependent 5-hydroxyuridine (ho5U) modification at position 34 in tRNAs. This Xanthomonas euvesicatoria pv. vesicatoria (strain 85-10) (Xanthomonas campestris pv. vesicatoria) protein is tRNA uridine(34) hydroxylase.